A 254-amino-acid polypeptide reads, in one-letter code: Type III pantothenate kinase (254 aa).

Residue 6–13 (DVGNSNIV) participates in ATP binding. Substrate is bound by residues Tyr-100 and 107-110 (GADR). The Proton acceptor role is filled by Asp-109. Asp-129 contributes to the K(+) binding site. Residue Thr-132 participates in ATP binding. Thr-184 provides a ligand contact to substrate.

It belongs to the type III pantothenate kinase family. Homodimer. It depends on NH4(+) as a cofactor. K(+) is required as a cofactor.

The protein localises to the cytoplasm. It carries out the reaction (R)-pantothenate + ATP = (R)-4'-phosphopantothenate + ADP + H(+). It functions in the pathway cofactor biosynthesis; coenzyme A biosynthesis; CoA from (R)-pantothenate: step 1/5. Its function is as follows. Catalyzes the phosphorylation of pantothenate (Pan), the first step in CoA biosynthesis. This is Type III pantothenate kinase from Pelobacter propionicus (strain DSM 2379 / NBRC 103807 / OttBd1).